The primary structure comprises 99 residues: NADH-quinone oxidoreductase subunit K (99 aa).

3 consecutive transmembrane segments (helical) span residues 3 to 23 (VTAY…GVLI), 28 to 48 (IVVF…LVAF), and 59 to 79 (IAAF…LAII).

The protein belongs to the complex I subunit 4L family. NDH-1 is composed of 14 different subunits. Subunits NuoA, H, J, K, L, M, N constitute the membrane sector of the complex.

Its subcellular location is the cell membrane. The enzyme catalyses a quinone + NADH + 5 H(+)(in) = a quinol + NAD(+) + 4 H(+)(out). Its function is as follows. NDH-1 shuttles electrons from NADH, via FMN and iron-sulfur (Fe-S) centers, to quinones in the respiratory chain. The immediate electron acceptor for the enzyme in this species is believed to be a menaquinone. Couples the redox reaction to proton translocation (for every two electrons transferred, four hydrogen ions are translocated across the cytoplasmic membrane), and thus conserves the redox energy in a proton gradient. This chain is NADH-quinone oxidoreductase subunit K, found in Nocardioides sp. (strain ATCC BAA-499 / JS614).